The chain runs to 496 residues: Membrane-bound lytic murein transglycosylase F (496 aa).

Positions 1–31 (MPIFSTRVLTYLRCIFRLFIGLMLLLTLVGC) are cleaved as a signal peptide. The segment at 32–271 (DFYTPSSQLE…KLDEKYFGHV (240 aa)) is non-LT domain. An LT domain region spans residues 273 to 496 (NFDFVDTRTF…AEVVKQITLR (224 aa)). Glu-316 is an active-site residue. The segment at 464–485 (HRREELDEDDSSEPQSTERPTV) is disordered.

In the N-terminal section; belongs to the bacterial solute-binding protein 3 family. It in the C-terminal section; belongs to the transglycosylase Slt family.

Its subcellular location is the cell outer membrane. It carries out the reaction Exolytic cleavage of the (1-&gt;4)-beta-glycosidic linkage between N-acetylmuramic acid (MurNAc) and N-acetylglucosamine (GlcNAc) residues in peptidoglycan, from either the reducing or the non-reducing ends of the peptidoglycan chains, with concomitant formation of a 1,6-anhydrobond in the MurNAc residue.. Murein-degrading enzyme that degrades murein glycan strands and insoluble, high-molecular weight murein sacculi, with the concomitant formation of a 1,6-anhydromuramoyl product. Lytic transglycosylases (LTs) play an integral role in the metabolism of the peptidoglycan (PG) sacculus. Their lytic action creates space within the PG sacculus to allow for its expansion as well as for the insertion of various structures such as secretion systems and flagella. This Aeromonas salmonicida (strain A449) protein is Membrane-bound lytic murein transglycosylase F.